The sequence spans 289 residues: 33 kDa chaperonin (289 aa).

2 cysteine pairs are disulfide-bonded: Cys-230-Cys-232 and Cys-263-Cys-266.

This sequence belongs to the HSP33 family. In terms of processing, under oxidizing conditions two disulfide bonds are formed involving the reactive cysteines. Under reducing conditions zinc is bound to the reactive cysteines and the protein is inactive.

It localises to the cytoplasm. Redox regulated molecular chaperone. Protects both thermally unfolding and oxidatively damaged proteins from irreversible aggregation. Plays an important role in the bacterial defense system toward oxidative stress. This is 33 kDa chaperonin from Shigella flexneri serotype 5b (strain 8401).